Reading from the N-terminus, the 464-residue chain is 3-isopropylmalate dehydratase large subunit (464 aa).

Residues C345, C405, and C408 each contribute to the [4Fe-4S] cluster site.

Belongs to the aconitase/IPM isomerase family. LeuC type 1 subfamily. Heterodimer of LeuC and LeuD. [4Fe-4S] cluster serves as cofactor.

It catalyses the reaction (2R,3S)-3-isopropylmalate = (2S)-2-isopropylmalate. Its pathway is amino-acid biosynthesis; L-leucine biosynthesis; L-leucine from 3-methyl-2-oxobutanoate: step 2/4. In terms of biological role, catalyzes the isomerization between 2-isopropylmalate and 3-isopropylmalate, via the formation of 2-isopropylmaleate. In Bacteroides fragilis (strain ATCC 25285 / DSM 2151 / CCUG 4856 / JCM 11019 / LMG 10263 / NCTC 9343 / Onslow / VPI 2553 / EN-2), this protein is 3-isopropylmalate dehydratase large subunit.